We begin with the raw amino-acid sequence, 76 residues long: MNKALFLCLVVLCAAVVFAAEDLQKAKHAPFKRAAPCFCSGKPGRGDLWILRGDCPGGYGYTSNCYKWPNICCYPH.

Positions 1–19 (MNKALFLCLVVLCAAVVFA) are cleaved as a signal peptide. A propeptide spanning residues 20-31 (AEDLQKAKHAPF) is cleaved from the precursor. Disulfide bonds link Cys37-Cys72, Cys39-Cys65, and Cys55-Cys73.

Belongs to the sea anemone type 3 (BDS) potassium channel toxin family. In terms of tissue distribution, moderately expressed in the ectodermal tissue from the distal and proximal tentacles, body wall, and oral disk.

It is found in the secreted. The protein resides in the nematocyst. Functionally, blocks Kv3 voltage-gated potassium channels. Reduces blood pressure. The polypeptide is Kappa-actitoxin-Avd4g (Anemonia viridis (Snakelocks anemone)).